The primary structure comprises 430 residues: POU domain, class 2, transcription factor 3 (430 aa).

Disordered stretches follow at residues M1–D40, H60–M81, L129–D180, and D248–L267. Composition is skewed to polar residues over residues A23–S32 and Q67–S78. A compositionally biased stretch (low complexity) spans L129–T139. Positions D176–E250 constitute a POU-specific domain. A compositionally biased stretch (low complexity) spans S251–L267. Positions K274 to N333 form a DNA-binding region, homeobox. 2 stretches are compositionally biased toward low complexity: residues S355–V364 and S374–G390. Residues S355–A413 form a disordered region. The segment covering H392–A413 has biased composition (polar residues).

This sequence belongs to the POU transcription factor family. Class-2 subfamily. Interacts (via the POU domain) with POU2AF1 and POU2AF2 in a DNA-dependent manner; this interaction recruits POU2AF2 to chromatin and increases POU2F3 transactivation activity. Expressed in epidermis and hair follicles.

Its subcellular location is the nucleus. Functionally, transcription factor that binds to the octamer motif (5'-ATTTGCAT-3') and regulates cell type-specific differentiation pathways. Involved in the regulation of keratinocytes differentiation. The POU2F3-POU2AF2/POU2AF3 complex drives the expression of tuft-cell-specific genes, a rare chemosensory cells that coordinate immune and neural functions within mucosal epithelial tissues. Its function is as follows. Inhibits transactivation by POU2F1. The protein is POU domain, class 2, transcription factor 3 (Pou2f3) of Rattus norvegicus (Rat).